Reading from the N-terminus, the 522-residue chain is MGQAPSSPAEPNVRDTSLCLWSPEFLDCESIGFEDGDYDFTANLPDDCLAHIFQFLSAGDRKRCSLVSKRWLLVDGQNRHRLSLDAKSEILPFLPCIFNRFDSVTKLALRCDRRSFSLSDEALFIVSIRCSNLIRVKLRGCREITDLGMESFARNCKSLRKLSCGSCTFGAKGINAMLEHCKVLEELSLKRIRGLHELAEPIKLSLSASLRSVFLKELVNGQVFGSLVATRTLKKVKIIRCLGNWDRVFEMNGNGNSSLTEIRLERLQVTDIGLFGISKCSNLETLHIVKTPDCSNLGLASVVERCKLLRKLHIDGWRVKRIGDQGLMSVAKHCLNLQELVLIGVDATYMSLSAIASNCKKLERLALCGSGTIGDAEIGCIAEKCVTLRKFCIKGCLISDVGVQALALGCPKLVKLKVKKCSLVTGEVREWLRERRMTLVVSMDDDETNGVGLVDGGDQRVLETVVEEEAPPVIDGDGGLGVAGGGRLGLAILKTKLGLLAGRNLVACTLRRWSQSEATSSI.

The 47-residue stretch at 38 to 84 (YDFTANLPDDCLAHIFQFLSAGDRKRCSLVSKRWLLVDGQNRHRLSL) folds into the F-box domain. LRR repeat units lie at residues 115-140 (SFSL…KLRG), 141-166 (CREI…SCGS), 169-191 (FGAK…SLKR), 266-290 (RLQV…HIVK), 291-316 (TPDC…HIDG), 319-344 (VKRI…VLIG), 348-369 (TYMS…ALCG), 370-393 (SGTI…KFCI), 395-420 (GCLI…KVKK), and 421-447 (CSLV…DDDE).

This is F-box/LRR-repeat protein 16 (FBL16) from Arabidopsis thaliana (Mouse-ear cress).